Reading from the N-terminus, the 276-residue chain is Large ribosomal subunit protein uL2 (276 aa).

Residues R28 to S38 show a composition bias toward basic and acidic residues. 2 disordered regions span residues R28 to G57 and T219 to K276.

This sequence belongs to the universal ribosomal protein uL2 family. Part of the 50S ribosomal subunit. Forms a bridge to the 30S subunit in the 70S ribosome.

In terms of biological role, one of the primary rRNA binding proteins. Required for association of the 30S and 50S subunits to form the 70S ribosome, for tRNA binding and peptide bond formation. It has been suggested to have peptidyltransferase activity; this is somewhat controversial. Makes several contacts with the 16S rRNA in the 70S ribosome. This is Large ribosomal subunit protein uL2 from Exiguobacterium sp. (strain ATCC BAA-1283 / AT1b).